The chain runs to 239 residues: MTWQRPDGRQPDQLRPIRFHREYTHFAAGSVLAECGQTKVLCTVSVQPGVPRFLEDTGQGWLTAEYRMLPGSTPERQRRELMKLSGRTQEIQRLIGRSLRAALDLQALGERTLVVDADVLQADAGTRTTSITGGFVALVDAVNQLVSKGEIPQSPIRHHVAAVSVGLLEGQPFLDLNYPEDVGAAVDLNVVATEQLELLEVQGTAEEGTLPRPQLNQMLDLAEIGIQQLIEAQRQALAS.

Phosphate-binding positions include R87 and 125 to 127; that span reads GTR.

The protein belongs to the RNase PH family. In terms of assembly, homohexameric ring arranged as a trimer of dimers.

It catalyses the reaction tRNA(n+1) + phosphate = tRNA(n) + a ribonucleoside 5'-diphosphate. Functionally, phosphorolytic 3'-5' exoribonuclease that plays an important role in tRNA 3'-end maturation. Removes nucleotide residues following the 3'-CCA terminus of tRNAs; can also add nucleotides to the ends of RNA molecules by using nucleoside diphosphates as substrates, but this may not be physiologically important. Probably plays a role in initiation of 16S rRNA degradation (leading to ribosome degradation) during starvation. The sequence is that of Ribonuclease PH from Acaryochloris marina (strain MBIC 11017).